The sequence spans 430 residues: Enolase (430 aa).

Q163 is a binding site for (2R)-2-phosphoglycerate. E205 serves as the catalytic Proton donor. Mg(2+) is bound by residues D242, E287, and D314. (2R)-2-phosphoglycerate is bound by residues K339, R368, S369, and K390. Residue K339 is the Proton acceptor of the active site.

Belongs to the enolase family. Requires Mg(2+) as cofactor.

It is found in the cytoplasm. It localises to the secreted. Its subcellular location is the cell surface. The enzyme catalyses (2R)-2-phosphoglycerate = phosphoenolpyruvate + H2O. It functions in the pathway carbohydrate degradation; glycolysis; pyruvate from D-glyceraldehyde 3-phosphate: step 4/5. Catalyzes the reversible conversion of 2-phosphoglycerate (2-PG) into phosphoenolpyruvate (PEP). It is essential for the degradation of carbohydrates via glycolysis. This Geobacillus sp. (strain WCH70) protein is Enolase.